The sequence spans 47 residues: Large ribosomal subunit protein bL34 (47 aa).

This sequence belongs to the bacterial ribosomal protein bL34 family.

The chain is Large ribosomal subunit protein bL34 from Corynebacterium glutamicum (strain R).